A 397-amino-acid chain; its full sequence is Enoyl-[acyl-carrier-protein] reductase [NADH] (397 aa).

Residues 48-53 (GASTGY), 74-75 (FE), 111-112 (DA), and 139-140 (LA) each bind NAD(+). Tyr225 lines the substrate pocket. Residue Tyr235 is the Proton donor of the active site. NAD(+)-binding positions include Lys244 and 273-275 (VVT).

It belongs to the TER reductase family. As to quaternary structure, monomer.

It carries out the reaction a 2,3-saturated acyl-[ACP] + NAD(+) = a (2E)-enoyl-[ACP] + NADH + H(+). The protein operates within lipid metabolism; fatty acid biosynthesis. Its function is as follows. Involved in the final reduction of the elongation cycle of fatty acid synthesis (FAS II). Catalyzes the reduction of a carbon-carbon double bond in an enoyl moiety that is covalently linked to an acyl carrier protein (ACP). The protein is Enoyl-[acyl-carrier-protein] reductase [NADH] of Pseudoalteromonas translucida (strain TAC 125).